Reading from the N-terminus, the 148-residue chain is Large ribosomal subunit protein uL13 (148 aa).

This sequence belongs to the universal ribosomal protein uL13 family. As to quaternary structure, part of the 50S ribosomal subunit.

In terms of biological role, this protein is one of the early assembly proteins of the 50S ribosomal subunit, although it is not seen to bind rRNA by itself. It is important during the early stages of 50S assembly. The polypeptide is Large ribosomal subunit protein uL13 (Ureaplasma urealyticum serovar 10 (strain ATCC 33699 / Western)).